A 348-amino-acid polypeptide reads, in one-letter code: Organic solute transporter alpha-like protein 3 (348 aa).

The Extracellular portion of the chain corresponds to 1 to 49 (MAKEHGAMRSVLNLIGSVMLPQDTSNCSDRHDTPSAPEFLSHLQPFQTV). An N-linked (GlcNAc...) asparagine glycan is attached at asparagine 26. The helical transmembrane segment at 50-70 (LLSIASFSTTIVLCLSLIHWF) threads the bilayer. Topologically, residues 71–84 (YVYKYVSIEKRRNK) are cytoplasmic. A helical membrane pass occupies residues 85–105 (LYWLIAVFPVACSCSFIAMCV). Over 106–109 (PRTA) the chain is Extracellular. A helical membrane pass occupies residues 110 to 130 (VILTCIGVLYYLMCLFVIVSL). Topologically, residues 131 to 180 (ARHLFGGRESFSTCLQYDDRPIDFRSPPFCCIIPKLPTARSTEKNIRRLE) are cytoplasmic. Residues 181 to 201 (WCVLQAPIVRSIIIFLDVVAV) traverse the membrane as a helical segment. The Extracellular segment spans residues 202-213 (AEMREDATPYIR). A helical membrane pass occupies residues 214-234 (YSDMASLCSLLLAIFGVHTLA). Residues 235–240 (RVTSNK) lie on the Cytoplasmic side of the membrane. The chain crosses the membrane as a helical span at residues 241–261 (LSAYCFMSMFRLVDISLLFFS). Residues 262–291 (AQQPMIFQNVLLRFNLISCGPLLNAQENAY) lie on the Extracellular side of the membrane. A helical transmembrane segment spans residues 292 to 312 (FVCNFIITCEMLLLSVLATWL). Residues 313-348 (LAPRHNAMFDAYRPSMALSETTASLNETEQSMILDH) lie on the Cytoplasmic side of the membrane.

This sequence belongs to the OST-alpha family.

It is found in the cell membrane. In terms of biological role, probable transporter. The chain is Organic solute transporter alpha-like protein 3 (osta-3) from Caenorhabditis elegans.